The following is a 506-amino-acid chain: Glutamate--tRNA ligase (506 aa).

Residues 12-22 (PSPTGDPHVGT) carry the 'HIGH' region motif. Positions 253 to 257 (KLSKR) match the 'KMSKS' region motif. K256 provides a ligand contact to ATP.

This sequence belongs to the class-I aminoacyl-tRNA synthetase family. Glutamate--tRNA ligase type 1 subfamily. Monomer.

It localises to the cytoplasm. It catalyses the reaction tRNA(Glu) + L-glutamate + ATP = L-glutamyl-tRNA(Glu) + AMP + diphosphate. Its function is as follows. Catalyzes the attachment of glutamate to tRNA(Glu) in a two-step reaction: glutamate is first activated by ATP to form Glu-AMP and then transferred to the acceptor end of tRNA(Glu). The sequence is that of Glutamate--tRNA ligase from Chlamydia muridarum (strain MoPn / Nigg).